Consider the following 230-residue polypeptide: Small ribosomal subunit protein uS2 (230 aa).

Belongs to the universal ribosomal protein uS2 family.

This is Small ribosomal subunit protein uS2 from Prochlorococcus marinus (strain NATL2A).